A 339-amino-acid chain; its full sequence is Cyclin-Y-like protein 1 (339 aa).

One can recognise a Cyclin N-terminal domain in the interval 181–263; it reads QLTAECAIVT…FLELLQFNIN (83 aa).

This sequence belongs to the cyclin family. Cyclin Y subfamily.

Its subcellular location is the cell membrane. Functionally, key regulator of Wnt signaling implicated in various biological processes such as embryonic neurogenesis. This Danio rerio (Zebrafish) protein is Cyclin-Y-like protein 1 (ccnyl1).